Consider the following 159-residue polypeptide: Phosphopantetheine adenylyltransferase (159 aa).

Threonine 9 contacts substrate. Residues 9–10 (TF) and histidine 17 contribute to the ATP site. Substrate is bound by residues lysine 41, leucine 73, and arginine 87. ATP-binding positions include 88-90 (GLR), glutamate 98, and 123-129 (YSFISST).

This sequence belongs to the bacterial CoaD family. In terms of assembly, homohexamer. The cofactor is Mg(2+).

Its subcellular location is the cytoplasm. It carries out the reaction (R)-4'-phosphopantetheine + ATP + H(+) = 3'-dephospho-CoA + diphosphate. It functions in the pathway cofactor biosynthesis; coenzyme A biosynthesis; CoA from (R)-pantothenate: step 4/5. Reversibly transfers an adenylyl group from ATP to 4'-phosphopantetheine, yielding dephospho-CoA (dPCoA) and pyrophosphate. The chain is Phosphopantetheine adenylyltransferase from Pseudomonas aeruginosa (strain LESB58).